A 143-amino-acid polypeptide reads, in one-letter code: Large ribosomal subunit protein uL15 (143 aa).

Residues 1–52 (MELNTIQPADGAKHYKRRVGRGIGSGLGKTAGRGHKGQKSRSGGFHKVGFEG) form a disordered region. Gly residues predominate over residues 21-31 (RGIGSGLGKTA).

Belongs to the universal ribosomal protein uL15 family. In terms of assembly, part of the 50S ribosomal subunit.

In terms of biological role, binds to the 23S rRNA. This chain is Large ribosomal subunit protein uL15, found in Herminiimonas arsenicoxydans.